The chain runs to 278 residues: HTH-type transcriptional activator RhaS (278 aa).

Residues 174 to 272 enclose the HTH araC/xylS-type domain; it reads NLLLAWLEDH…NWSPRDIRQG (99 aa). 2 DNA-binding regions (H-T-H motif) span residues 191 to 212 and 239 to 262; these read DAVADQFSLSLRTLHRQLKQQT and VTDIAYRCGFSDSNHFSTLFRREF.

As to quaternary structure, binds DNA as a dimer.

It localises to the cytoplasm. In terms of biological role, activates expression of the rhaBAD and rhaT operons. This Escherichia coli O81 (strain ED1a) protein is HTH-type transcriptional activator RhaS.